The following is a 1301-amino-acid chain: ABC transporter BEA3 (1301 aa).

The interval 1–30 is disordered; sequence MGKRTAENSAANGEGEEKHPEIGVDGRPEK. Residues 15–30 show a composition bias toward basic and acidic residues; that stretch reads GEEKHPEIGVDGRPEK. 4 consecutive transmembrane segments (helical) span residues 54-74, 103-123, 177-197, and 203-223; these read VGVIASIGVGITLPLLNIVFG, LYLLGLFLGRLVLGYITNFAF, LGVFVEYNATMIASIIVAFIY, and LVTFTAVVFITFSVSLVLPYI. The region spanning 54–345 is the ABC transmembrane type-1 1 domain; that stretch reads VGVIASIGVG…ISTPLLAVSK (292 aa). N-linked (GlcNAc...) asparagine glycosylation is present at Asn229. Transmembrane regions (helical) follow at residues 281-301 and 313-333; these read FIALQYGLVFFSSYAAFGLAF and INQLGAIIVVLFSVMMIVTAM. Residues 378–667 enclose the ABC transporter 1 domain; sequence IILEDVTFAY…EAGLYYNLVN (290 aa). Position 413 to 420 (413 to 420) interacts with ATP; it reads GPSGSGKS. Over residues 442–454 the composition is skewed to basic and acidic residues; the sequence is VEKPTDKKNNGGK. The interval 442–461 is disordered; it reads VEKPTDKKNNGGKEEDEQEL. Residues Asn511 and Asn618 are each glycosylated (N-linked (GlcNAc...) asparagine). The tract at residues 682-708 is disordered; it reads VIAKEERPSSVHEKAHTESTIEEKPLE. The 290-residue stretch at 735–1024 folds into the ABC transmembrane type-1 2 domain; that stretch reads ALTLFFSACA…ALSFGPNVAQ (290 aa). 6 helical membrane-spanning segments follow: residues 745 to 765, 779 to 799, 858 to 878, 880 to 900, 961 to 981, and 987 to 1007; these read GAAVPFQAWLFAKVIIVFGYL, SLMWTVLAISAGLAYCATFFL, SVFIALWTLMGTIAIALAFAW, LALVSLCVVVPILLAAGYWRM, WVSLLYAFSDSATIGCQAIVL, and LLLSGEYDLESFFVCFMSVLN. Residues 1060–1296 enclose the ABC transporter 2 domain; that stretch reads IELENIYFKY…RGVYWQMCQS (237 aa). An ATP-binding site is contributed by 1094-1101; the sequence is GASGSGKS.

This sequence belongs to the ABC transporter superfamily. ABCB family. Multidrug resistance exporter (TC 3.A.1.201) subfamily.

Its subcellular location is the cell membrane. ABC transporter; part of the gene cluster that mediates the biosynthesis of beauvericin (BEA), a non-ribosomal cyclic hexadepsipeptide that shows antibiotic, antifungal, insecticidal, and cancer cell antiproliferative and antihaptotactic activity. Functions as a regulator of beauvericin production, rather than in BEA transport out of the cell. Beauvericin has low toxicity to the producing fungus and BEA3 does not play a role in detoxification and self-protection of the producing fungus. The chain is ABC transporter BEA3 from Gibberella fujikuroi (strain CBS 195.34 / IMI 58289 / NRRL A-6831) (Bakanae and foot rot disease fungus).